The sequence spans 143 residues: Small ribosomal subunit protein eS6 (143 aa).

This sequence belongs to the eukaryotic ribosomal protein eS6 family.

This chain is Small ribosomal subunit protein eS6, found in Methanoregula boonei (strain DSM 21154 / JCM 14090 / 6A8).